The chain runs to 247 residues: Sortase A (247 aa).

Residues 1–9 (MRNKKKLHG) are Cytoplasmic-facing. A helical transmembrane segment spans residues 10-30 (FFNFVRWLLVVLLIIVGLALV). Residues 31–247 (FNKPIRNAFI…FSKKYNQINL (217 aa)) are Extracellular-facing. His-140 acts as the Proton donor/acceptor in catalysis. The active-site Acyl-thioester intermediate is Cys-206.

This sequence belongs to the bacterial sortase family. Class A subfamily.

The protein localises to the cell membrane. In terms of biological role, transpeptidase that anchors surface proteins to the cell wall. Recognizes and modifies its substrate by proteolytic cleavage of a C-terminal sorting signal. Following cleavage, a covalent intermediate is formed via a thioester bond between the sortase and its substrate, which is then transferred and covalently attached to the cell wall. This sortase recognizes a Leu-Pro-x-Thr-Gly (LPXTG) motif, which is cleaved by the sortase between the threonine and glycine residues. Essential for adherence to eukaryotic cells and for binding to fibronectin and fibrinogen. This chain is Sortase A, found in Streptococcus agalactiae serotype III (strain NEM316).